The following is a 152-amino-acid chain: Small integral membrane protein 28 (152 aa).

Residues 52-72 (FLCILLPATILLFLAFLLLFL) form a helical membrane-spanning segment. Positions 117–152 (PLPPEATLPSQCLPPSYEEATRNPPGEEAQGCSPSV) are disordered.

It is found in the membrane. This chain is Small integral membrane protein 28, found in Homo sapiens (Human).